A 398-amino-acid polypeptide reads, in one-letter code: Phosphoglycerate kinase (398 aa).

Residues 21-23, arginine 36, 59-62, arginine 119, and arginine 157 contribute to the substrate site; these read DFN and HLGR. Residues lysine 208, glycine 296, glutamate 327, and 354–357 each bind ATP; that span reads GGDS.

The protein belongs to the phosphoglycerate kinase family. Monomer.

It is found in the cytoplasm. It carries out the reaction (2R)-3-phosphoglycerate + ATP = (2R)-3-phospho-glyceroyl phosphate + ADP. Its pathway is carbohydrate degradation; glycolysis; pyruvate from D-glyceraldehyde 3-phosphate: step 2/5. The chain is Phosphoglycerate kinase from Streptococcus uberis (strain ATCC BAA-854 / 0140J).